Here is a 344-residue protein sequence, read N- to C-terminus: Heat-inducible transcription repressor HrcA (344 aa).

This sequence belongs to the HrcA family.

Its function is as follows. Negative regulator of class I heat shock genes (grpE-dnaK-dnaJ and groELS operons). Prevents heat-shock induction of these operons. This is Heat-inducible transcription repressor HrcA from Streptococcus equi subsp. zooepidemicus (strain MGCS10565).